Consider the following 259-residue polypeptide: Light-harvesting complex stress-related protein 3.1, chloroplastic (259 aa).

A chloroplast-targeting transit peptide spans 1-45 (MLANVVSRKASGLRQTPARATVAVKSVSGRRTTAAEPQTAAPVAA). Tyrosine 51 serves as a coordination point for chlorophyll b. 3 residues coordinate chlorophyll a: phenylalanine 66, glutamate 87, and histidine 90. Arginine 92 serves as a coordination point for chlorophyll b. A helical transmembrane segment spans residues 93–113 (VAMLAALGFVVGEQLQDFPLF). Glutamine 130 contributes to the chlorophyll a binding site. A helical transmembrane segment spans residues 137–157 (EPLLIAIGVAESYRVAVGWAT). Residues glutamate 147 and arginine 150 each coordinate chlorophyll b. Chlorophyll a contacts are provided by lysine 196, glutamate 197, asparagine 200, arginine 202, and glutamine 214. A helical membrane pass occupies residues 203–223 (LAMIAIAAFVAQELVEQTEIF).

The protein belongs to the light-harvesting chlorophyll a/b-binding (LHC) protein family. In terms of assembly, interacts with the photosystem II-light-harvesting complex II (PSII-LHCII) supercomplex to form PSII-LHCII-LHCSR3 supercomplex.

Its subcellular location is the plastid. It localises to the chloroplast thylakoid membrane. Functionally, required for non-photochemical quenching (NPQ), a mechanism that converts and dissipates the harmful excess absorbed light energy into heat and protect the photosynthetic apparatus from photo-oxidative damage. NPQ includes dissipating excess light energy to heat (qE) and the reversible coupling of LHCII to photosystems (state transitions or qT), which are considered separate NPQ mechanisms. Is responsible for most of the excess light energy to heat dissipation (qE), also known as energy-dependent chlorophyll fluorescence quenching activity of chlorophyll excited states. Involved in a de-coupling and re-coupling of energy transfer to photosystem II (PSII) during qT. Binds chlorophyll a and b. Is able to sense luminal acidification of the thylakoid membranes, which occurs along with elevated electron flow caused by excess light. Establishes interactions with photosystem II (PSII) antenna components upon lumen acidification, and protonation of lumen-exposed, negatively charged residues both in LHCSR3 and in PSII antenna components. Mediates excitation energy transfer from light-harvesting complex II (LHCII) to photosystem I (PSI), rather than photosystem II (PSII), at low pH, which mimics the acidified lumen of the thylakoid membranes in high light-exposed chloroplasts. Activates PSI-dependent fluorescence quenching in addition to dissipating excitation energy in LHCII to avoid photooxidative stress under excess light. Contributes with PGRL1 to the regulation of electron flow upstream of photosystem I (PSI), and limits the accumulation of electrons on the PSI acceptor side, thus avoiding PSI photoinhibition. In Chlamydomonas reinhardtii (Chlamydomonas smithii), this protein is Light-harvesting complex stress-related protein 3.1, chloroplastic.